The chain runs to 368 residues: Caffeine synthase 3 (368 aa).

Tyrosine 23 lines the S-adenosyl-L-homocysteine pocket. Position 30 (threonine 30) interacts with caffeine. S-adenosyl-L-homocysteine-binding residues include cysteine 65, asparagine 70, aspartate 102, leucine 103, serine 137, and phenylalanine 138. Tyrosine 155, histidine 158, and tryptophan 159 together coordinate caffeine. Residue asparagine 176 participates in Mg(2+) binding. Arginine 224 lines the caffeine pocket. Mg(2+) is bound by residues aspartate 262, phenylalanine 264, and asparagine 265. Residue phenylalanine 320 participates in caffeine binding.

This sequence belongs to the methyltransferase superfamily. Type-7 methyltransferase family. The cofactor is Mg(2+).

It carries out the reaction theobromine + S-adenosyl-L-methionine = caffeine + S-adenosyl-L-homocysteine + H(+). The enzyme catalyses 7-methylxanthine + S-adenosyl-L-methionine = theobromine + S-adenosyl-L-homocysteine + H(+). It functions in the pathway alkaloid biosynthesis. Involved in the biosynthesis of caffeine. Catalyzes the conversion of 7-methylxanthine (7mX) to theobromine and of theobromine to caffeine. The polypeptide is Caffeine synthase 3 (Camellia sinensis (Tea plant)).